The primary structure comprises 475 residues: CAAX prenyl protease 1 homolog (475 aa).

Residues 1-18 (MGMWASLDALWEMPAEKR) are Lumenal-facing. Residues 19-39 (IFGAVLLFSWTVYLWETFLAQ) form a helical membrane-spanning segment. Over 40–81 (RQRRIYKTTTHVPPELGQIMDSETFEKSRLYQLDKSTFSFWS) the chain is Nuclear. A helical membrane pass occupies residues 82 to 102 (GLYSETEGTLILLFGGIPYLW). At 103–123 (RLSGRFCGYAGFGPEYEITQS) the chain is on the lumenal side. Residues 124-144 (LVFLLLATLFSALTGLPWSLY) traverse the membrane as a helical segment. Residues 145-170 (NTFVIEEKHGFNQQTLGFFMKDAIKK) lie on the Nuclear side of the membrane. The helical transmembrane segment at 171–191 (FVVTQCILLPVSSLLLYIIKI) threads the bilayer. Residues 192-195 (GGDY) lie on the Lumenal side of the membrane. Residues 196–216 (FFIYAWLFTLVVSLVLVTIYA) form a helical membrane-spanning segment. The Nuclear portion of the chain corresponds to 217-347 (DYIAPLFDKF…GHWKLGHTVK (131 aa)). His-335 is a binding site for Zn(2+). The active site involves Glu-336. His-339 is a Zn(2+) binding site. A helical transmembrane segment spans residues 348–368 (NIIISQMNSFLCFFLFAVLIG). The Lumenal segment spans residues 369–382 (RKELFAAFGFYDSQ). The helical transmembrane segment at 383 to 405 (PTLIGLLIIFQFIFSPYNEVLSF) threads the bilayer. Residues 406-475 (CLTVLSRRFE…LQALKTMKQH (70 aa)) lie on the Nuclear side of the membrane. Glu-415 contacts Zn(2+).

This sequence belongs to the peptidase M48A family. It depends on Zn(2+) as a cofactor. As to expression, widely expressed. High levels in kidney, prostate, testis and ovary.

The protein resides in the endoplasmic reticulum membrane. It is found in the nucleus inner membrane. The protein localises to the early endosome membrane. It localises to the late endosome membrane. It carries out the reaction Hydrolyzes the peptide bond -P2-(S-farnesyl or geranylgeranyl)C-P1'-P2'-P3'-COOH where P1' and P2' are amino acids with aliphatic side chains and P3' is any C-terminal residue.. Transmembrane metalloprotease whose catalytic activity is critical for processing lamin A/LMNA on the inner nuclear membrane and clearing clogged translocons on the endoplasmic reticulum. Proteolytically removes the C-terminal three residues of farnesylated proteins. Also plays an antiviral role independently of its protease activity by restricting enveloped RNA and DNA viruses, including influenza A, Zika, Ebola, Sindbis, vesicular stomatitis, cowpox, and vaccinia. Mechanistically, controls IFITM antiviral pathway to hinder viruses from breaching the endosomal barrier by modulating membrane fluidity. This chain is CAAX prenyl protease 1 homolog, found in Homo sapiens (Human).